The primary structure comprises 321 residues: Ribosomal RNA small subunit methyltransferase H (321 aa).

Residues 40–42 (GGH), Asp60, Phe84, Asp106, and Gln113 contribute to the S-adenosyl-L-methionine site.

The protein belongs to the methyltransferase superfamily. RsmH family.

It is found in the cytoplasm. It catalyses the reaction cytidine(1402) in 16S rRNA + S-adenosyl-L-methionine = N(4)-methylcytidine(1402) in 16S rRNA + S-adenosyl-L-homocysteine + H(+). Its function is as follows. Specifically methylates the N4 position of cytidine in position 1402 (C1402) of 16S rRNA. The polypeptide is Ribosomal RNA small subunit methyltransferase H (Haemophilus influenzae (strain ATCC 51907 / DSM 11121 / KW20 / Rd)).